The chain runs to 249 residues: Undecaprenyl-diphosphatase (249 aa).

8 consecutive transmembrane segments (helical) span residues 11 to 31, 35 to 55, 74 to 94, 101 to 121, 135 to 155, 175 to 195, 208 to 228, and 229 to 249; these read GLTE…TAIF, PDVG…VIFV, ITLS…GIFF, IFSE…FMLL, IPYL…LPGI, AVKY…VLEM, FIVA…MVIA, and GKLK…IFYI.

Belongs to the UppP family.

The protein resides in the cell membrane. It carries out the reaction di-trans,octa-cis-undecaprenyl diphosphate + H2O = di-trans,octa-cis-undecaprenyl phosphate + phosphate + H(+). Catalyzes the dephosphorylation of undecaprenyl diphosphate (UPP). The polypeptide is Undecaprenyl-diphosphatase (Methanococcus vannielii (strain ATCC 35089 / DSM 1224 / JCM 13029 / OCM 148 / SB)).